Here is a 125-residue protein sequence, read N- to C-terminus: NLYQFGNMIQCANHGRRPTRHYMDYGCYCGKGGSGTPVDELDRCCQTHDDCYGEAEKLPACNYMMSGPYYNTYSYECNEGELTCKDNNDECKAFICNCDRTAAICFARAPYNDANWNIDTKTRCQ.

7 disulfides stabilise this stretch: Cys-11/Cys-77, Cys-27/Cys-124, Cys-29/Cys-45, Cys-44/Cys-105, Cys-51/Cys-98, Cys-61/Cys-91, and Cys-84/Cys-96. Ca(2+)-binding residues include Tyr-28, Gly-30, and Gly-32. The active site involves His-48. Position 49 (Asp-49) interacts with Ca(2+). The active site involves Asp-99.

It belongs to the phospholipase A2 family. Group I subfamily. D49 sub-subfamily. Ca(2+) is required as a cofactor. No glycosylation was detected on this protein. In terms of tissue distribution, expressed by the venom gland.

Its subcellular location is the secreted. It carries out the reaction a 1,2-diacyl-sn-glycero-3-phosphocholine + H2O = a 1-acyl-sn-glycero-3-phosphocholine + a fatty acid + H(+). Snake venom phospholipase A2 (PLA2) that blocks neuromuscular transmission, but that does not produce blockade by virtue of a selective action on nerve endings. Instead, the toxin acts both on nerve and on muscle. PLA2 catalyzes the calcium-dependent hydrolysis of the 2-acyl groups in 3-sn-phosphoglycerides. This chain is Acidic phospholipase A2 HTe, found in Notechis scutatus scutatus (Mainland tiger snake).